The sequence spans 145 residues: Bacilliredoxin ABC2045 (145 aa).

Belongs to the bacilliredoxin family.

This Shouchella clausii (strain KSM-K16) (Alkalihalobacillus clausii) protein is Bacilliredoxin ABC2045.